The primary structure comprises 650 residues: 1-deoxy-D-xylulose-5-phosphate synthase (650 aa).

Residues His-73 and 114-116 (SHA) contribute to the thiamine diphosphate site. A Mg(2+)-binding site is contributed by Asp-145. Residues 146 to 147 (GA), Asn-174, Tyr-285, and Glu-367 each bind thiamine diphosphate. A Mg(2+)-binding site is contributed by Asn-174. The interval 631–650 (MGDEVGADESNQTPAGGGQA) is disordered.

The protein belongs to the transketolase family. DXPS subfamily. Homodimer. Mg(2+) is required as a cofactor. The cofactor is thiamine diphosphate.

The enzyme catalyses D-glyceraldehyde 3-phosphate + pyruvate + H(+) = 1-deoxy-D-xylulose 5-phosphate + CO2. Its pathway is metabolic intermediate biosynthesis; 1-deoxy-D-xylulose 5-phosphate biosynthesis; 1-deoxy-D-xylulose 5-phosphate from D-glyceraldehyde 3-phosphate and pyruvate: step 1/1. Its function is as follows. Catalyzes the acyloin condensation reaction between C atoms 2 and 3 of pyruvate and glyceraldehyde 3-phosphate to yield 1-deoxy-D-xylulose-5-phosphate (DXP). In Parafrankia sp. (strain EAN1pec), this protein is 1-deoxy-D-xylulose-5-phosphate synthase.